The following is a 149-amino-acid chain: Large ribosomal subunit protein uL15 (149 aa).

Residues Gly30–Gln63 form a disordered region. Residues Gly36–Gly49 show a composition bias toward basic residues.

It belongs to the universal ribosomal protein uL15 family. Part of the 50S ribosomal subunit.

Functionally, binds to the 23S rRNA. This is Large ribosomal subunit protein uL15 from Xylella fastidiosa (strain 9a5c).